The chain runs to 145 residues: D-aminoacyl-tRNA deacylase (145 aa).

Positions 137 to 138 (GP) match the Gly-cisPro motif, important for rejection of L-amino acids motif.

This sequence belongs to the DTD family. In terms of assembly, homodimer.

The protein localises to the cytoplasm. The enzyme catalyses glycyl-tRNA(Ala) + H2O = tRNA(Ala) + glycine + H(+). It catalyses the reaction a D-aminoacyl-tRNA + H2O = a tRNA + a D-alpha-amino acid + H(+). Its function is as follows. An aminoacyl-tRNA editing enzyme that deacylates mischarged D-aminoacyl-tRNAs. Also deacylates mischarged glycyl-tRNA(Ala), protecting cells against glycine mischarging by AlaRS. Acts via tRNA-based rather than protein-based catalysis; rejects L-amino acids rather than detecting D-amino acids in the active site. By recycling D-aminoacyl-tRNA to D-amino acids and free tRNA molecules, this enzyme counteracts the toxicity associated with the formation of D-aminoacyl-tRNA entities in vivo and helps enforce protein L-homochirality. The chain is D-aminoacyl-tRNA deacylase from Legionella pneumophila (strain Paris).